Here is an 821-residue protein sequence, read N- to C-terminus: Bifunctional dethiobiotin synthetase/7,8-diamino-pelargonic acid aminotransferase, mitochondrial (821 aa).

The dethiobiotin synthetase stretch occupies residues 28 to 283 (SPAFAVFGAN…VHVLPPIPED (256 aa)). 39–44 (GVGKTL) is an ATP binding site. A Mg(2+)-binding site is contributed by T43. Residue T72 coordinates substrate. A Mg(2+)-binding site is contributed by E194. 194–197 (ETAG) contacts ATP. The tract at residues 316–820 (RLNSMQRKSK…AKVHRRLQKL (505 aa)) is 7,8-diamino-pelargonic acid aminotransferase. 374 to 375 (WW) contributes to the (8S)-8-amino-7-oxononanoate binding site. 436–437 (GS) provides a ligand contact to pyridoxal 5'-phosphate. Residue Y482 coordinates (8S)-8-amino-7-oxononanoate. Pyridoxal 5'-phosphate is bound at residue D626. (8S)-8-amino-7-oxononanoate is bound by residues K655 and G689. K655 is modified (N6-(pyridoxal phosphate)lysine). S691 lines the pyridoxal 5'-phosphate pocket. Residue R787 participates in (8S)-8-amino-7-oxononanoate binding.

This sequence in the N-terminal section; belongs to the dethiobiotin synthetase family. The protein in the C-terminal section; belongs to the class-III pyridoxal-phosphate-dependent aminotransferase family. BioA subfamily. Mg(2+) serves as cofactor. It depends on pyridoxal 5'-phosphate as a cofactor.

It is found in the mitochondrion. It carries out the reaction (7R,8S)-7,8-diammoniononanoate + CO2 + ATP = (4R,5S)-dethiobiotin + ADP + phosphate + 3 H(+). The catalysed reaction is (8S)-8-amino-7-oxononanoate + S-adenosyl-L-methionine = S-adenosyl-4-methylsulfanyl-2-oxobutanoate + (7R,8S)-7,8-diammoniononanoate. The protein operates within cofactor biosynthesis; biotin biosynthesis; biotin from 7,8-diaminononanoate: step 1/2. It participates in cofactor biosynthesis; biotin biosynthesis; 7,8-diaminononanoate from 8-amino-7-oxononanoate (SAM route): step 1/1. Its function is as follows. Bifunctional enzyme that catalyzes two different reactions involved in the biotin biosynthesis. In terms of biological role, catalyzes a mechanistically unusual reaction, the ATP-dependent insertion of CO2 between the N7 and N8 nitrogen atoms of 7,8-diaminopelargonic acid (DAPA) to form an ureido ring. Catalyzes the transfer of the alpha-amino group from S-adenosyl-L-methionine (SAM) to 7-keto-8-aminopelargonic acid (KAPA) to form 7,8-diaminopelargonic acid (DAPA). It is the only aminotransferase known to utilize SAM as an amino donor. This is Bifunctional dethiobiotin synthetase/7,8-diamino-pelargonic acid aminotransferase, mitochondrial (BIO3-BIO1) from Oryza sativa subsp. japonica (Rice).